The chain runs to 209 residues: Ribosomal RNA large subunit methyltransferase E (209 aa).

S-adenosyl-L-methionine contacts are provided by G63, W65, D83, D99, and D124. The active-site Proton acceptor is K164.

It belongs to the class I-like SAM-binding methyltransferase superfamily. RNA methyltransferase RlmE family.

The protein localises to the cytoplasm. It catalyses the reaction uridine(2552) in 23S rRNA + S-adenosyl-L-methionine = 2'-O-methyluridine(2552) in 23S rRNA + S-adenosyl-L-homocysteine + H(+). Its function is as follows. Specifically methylates the uridine in position 2552 of 23S rRNA at the 2'-O position of the ribose in the fully assembled 50S ribosomal subunit. The polypeptide is Ribosomal RNA large subunit methyltransferase E (Shewanella woodyi (strain ATCC 51908 / MS32)).